Reading from the N-terminus, the 369-residue chain is 3,7-dimethylxanthine N-methyltransferase TCS1 (369 aa).

Tyrosine 24 serves as a coordination point for S-adenosyl-L-homocysteine. Threonine 31 lines the caffeine pocket. Cysteine 66, asparagine 71, aspartate 103, leucine 104, serine 138, and phenylalanine 139 together coordinate S-adenosyl-L-homocysteine. Caffeine-binding residues include tyrosine 156, histidine 159, and tryptophan 160. Asparagine 177 provides a ligand contact to Mg(2+). Caffeine is bound at residue arginine 225. Residues aspartate 263, phenylalanine 265, and asparagine 266 each coordinate Mg(2+). Phenylalanine 321 serves as a coordination point for caffeine.

It belongs to the methyltransferase superfamily. Type-7 methyltransferase family. The cofactor is Mg(2+).

The enzyme catalyses 1,7-dimethylxanthine + S-adenosyl-L-methionine = caffeine + S-adenosyl-L-homocysteine + H(+). The catalysed reaction is theobromine + S-adenosyl-L-methionine = caffeine + S-adenosyl-L-homocysteine + H(+). It catalyses the reaction 7-methylxanthine + S-adenosyl-L-methionine = theobromine + S-adenosyl-L-homocysteine + H(+). It participates in alkaloid biosynthesis. Functionally, involved in the biosynthesis of caffeine in cv. Puer. Involved in the biosynthesis of theacrine in cv. Kucha, a caffeine-like xanthine alkaloid with diverse beneficial biological activities including anti-depressive, sedative, and hypnotic activities, improving learning and memory, increasing exercise activity, and preventing nonalcoholic fatty liver disease. Catalyzes the conversion of 7-methylxanthine (7mX) to theobromine and of theobromine to caffeine. Has 3-N- and 1-N-methylation activity. The sequence is that of 3,7-dimethylxanthine N-methyltransferase TCS1 from Camellia sinensis var. assamica (Assam tea).